The sequence spans 133 residues: Small ribosomal subunit protein uS8 (133 aa).

It belongs to the universal ribosomal protein uS8 family. In terms of assembly, part of the 30S ribosomal subunit. Contacts proteins S5 and S12.

In terms of biological role, one of the primary rRNA binding proteins, it binds directly to 16S rRNA central domain where it helps coordinate assembly of the platform of the 30S subunit. This is Small ribosomal subunit protein uS8 from Leptospira borgpetersenii serovar Hardjo-bovis (strain JB197).